Here is a 105-residue protein sequence, read N- to C-terminus: UPF0145 protein CPS_2458 (105 aa).

The protein belongs to the UPF0145 family.

In Colwellia psychrerythraea (strain 34H / ATCC BAA-681) (Vibrio psychroerythus), this protein is UPF0145 protein CPS_2458.